A 502-amino-acid chain; its full sequence is Protein IWS1 homolog 1 (502 aa).

The segment covering 1–12 (MGFEDDPYRDVD) has biased composition (basic and acidic residues). Disordered regions lie at residues 1 to 61 (MGFE…DNDK) and 87 to 208 (DEDV…DEDE). Composition is skewed to acidic residues over residues 13–22 (GEPIVDFDDF), 34–49 (QDFD…DWDG), and 87–97 (DEDVDDAEFDE). Basic and acidic residues-rich tracts occupy residues 138–151 (NRGE…DEMW) and 181–194 (PSER…DRSP). Tyr185 bears the Phosphotyrosine mark. One can recognise a TFIIS N-terminal domain in the interval 287–370 (TLLKNWLEPL…DKWSRPIFNK (84 aa)). Positions 385–434 (VPYRRPPVKKPSNKATMESRDGDFDLEIRERKTGLTSGQSSRGDRQMTMR) are disordered. The segment covering 401 to 417 (MESRDGDFDLEIRERKT) has biased composition (basic and acidic residues).

The protein belongs to the IWS1 family. In terms of assembly, interacts with BZR2/BES1 and SPT6 (via N-terminus). Interacts with ASHH2/SDG8.

It localises to the nucleus. Functionally, transcription factor involved in RNA polymerase II (RNAPII) transcription regulation. Involved in transcription elongation. May function at post-recruitment and elongation steps of transcription. May be recruited by BZR2/BES1 to target genes and promote their expression during transcription elongation process. Required for brassinosteroid (BR)-induced gene expression. Required the for regulation of numerous nitrogen-responsive genes in roots. Acts in roots to repress NRT2.1 transcription in response to high nitrogen supply. This repression is associated with an IWS1-dependent increase of trimethylation on 'Lys-27' H3K27me3 at the NRT2.1 locus. The sequence is that of Protein IWS1 homolog 1 from Arabidopsis thaliana (Mouse-ear cress).